Consider the following 504-residue polypeptide: Glycerol kinase (504 aa).

Position 12 (threonine 12) interacts with ADP. Threonine 12, threonine 13, and serine 14 together coordinate ATP. Residue threonine 12 coordinates sn-glycerol 3-phosphate. Arginine 16 provides a ligand contact to ADP. Sn-glycerol 3-phosphate is bound by residues arginine 82, glutamate 83, tyrosine 134, and aspartate 244. Glycerol contacts are provided by arginine 82, glutamate 83, tyrosine 134, aspartate 244, and glutamine 245. Residues threonine 266 and glycine 309 each coordinate ADP. ATP-binding residues include threonine 266, glycine 309, glutamine 313, and glycine 410. Residues glycine 410 and asparagine 414 each contribute to the ADP site.

The protein belongs to the FGGY kinase family. In terms of assembly, homotetramer and homodimer (in equilibrium).

It catalyses the reaction glycerol + ATP = sn-glycerol 3-phosphate + ADP + H(+). It functions in the pathway polyol metabolism; glycerol degradation via glycerol kinase pathway; sn-glycerol 3-phosphate from glycerol: step 1/1. Activated by phosphorylation and inhibited by fructose 1,6-bisphosphate (FBP). Key enzyme in the regulation of glycerol uptake and metabolism. Catalyzes the phosphorylation of glycerol to yield sn-glycerol 3-phosphate. This Alkaliphilus oremlandii (strain OhILAs) (Clostridium oremlandii (strain OhILAs)) protein is Glycerol kinase.